The chain runs to 190 residues: Ribosome hibernation promotion factor (190 aa).

It belongs to the HPF/YfiA ribosome-associated protein family. Long HPF subfamily. Interacts with 100S ribosomes.

The protein resides in the cytoplasm. Its function is as follows. Required for dimerization of active 70S ribosomes into 100S ribosomes in stationary phase; 100S ribosomes are translationally inactive and sometimes present during exponential growth. This is Ribosome hibernation promotion factor from Staphylococcus aureus (strain COL).